A 1249-amino-acid chain; its full sequence is Fanconi anemia group J protein (1249 aa).

The region spanning 11 to 442 (GGVKIYFPYK…KDHEPLRAVC (432 aa)) is the Helicase ATP-binding domain. Polar residues predominate over residues 102-127 (QGTSRHFNYPSTPPSERNGTSSTCQD). The segment at 102 to 131 (QGTSRHFNYPSTPPSERNGTSSTCQDSPEK) is disordered. Residues 158–175 (KKRIRPLETTQQIRKRHC) carry the Nuclear localization signal motif. Position 185 to 192 (185 to 192 (AKVDSGKT)) interacts with ATP. Cys283, Cys298, Cys310, and Cys350 together coordinate [4Fe-4S] cluster. Positions 393 to 396 (DEAH) match the DEAH box motif. 7 positions are modified to phosphoserine: Ser505, Ser927, Ser930, Ser956, Ser990, Ser1004, and Ser1032. Residues 888-1063 (HQKVLNVSIK…ESSNLTVNTS (176 aa)) form an interaction with BRCA1 region. Disordered regions lie at residues 1018–1042 (KATPELGSSENSASSPPRFKTEKME) and 1108–1127 (VSEEDKQSTSNRDFETEAED). A compositionally biased stretch (polar residues) spans 1023–1032 (LGSSENSASS). Residues 1110–1122 (EEDKQSTSNRDFE) are compositionally biased toward basic and acidic residues. A Phosphoserine modification is found at Ser1237. An N6-acetyllysine modification is found at Lys1249.

The protein belongs to the DEAD box helicase family. DEAH subfamily. Interacts with the replication protein A complex (RPA) via the RPA1 subunit; following DNA damage they colocalize in foci in the nucleus. Binds directly to the BRCT domains of BRCA1. Interacts with the CIA complex components CIAO1, CIAO2B and MMS19. [4Fe-4S] cluster serves as cofactor. In terms of processing, phosphorylated. Phosphorylation is necessary for interaction with BRCA1, and is cell-cycle regulated. Post-translationally, acetylation at Lys-1249 facilitates DNA end processing required for repair and checkpoint signaling. Ubiquitously expressed, with highest levels in testis.

The protein localises to the nucleus. It is found in the cytoplasm. It catalyses the reaction Couples ATP hydrolysis with the unwinding of duplex DNA at the replication fork by translocating in the 5'-3' direction. This creates two antiparallel DNA single strands (ssDNA). The leading ssDNA polymer is the template for DNA polymerase III holoenzyme which synthesizes a continuous strand.. It carries out the reaction ATP + H2O = ADP + phosphate + H(+). Its activity is regulated as follows. Helicase activity on forked substrates is stimulated by replication protein A complex heterotrimer (RPA1, RPA2, RPA3). Helicase activity on G-quadruplex DNA is stimulated 3-fold by RPA, and inhibited by MSH2/MSH6. Unwinding of G-quadruplex DNA is inhibited by ATP-gamma-S and telomestatin (TMS); TMA does not inhibit unwinding of forked-duplex DNA. Helicase activity on dsDNA and G-quadruplex DNA is inhibited by porphyrin derivatives meso-tetra (N-methyl-4-pyridyl) porphine tetra tosylate (T4) and N-methyl mesoporphyrin IX (NMM). Its function is as follows. DNA-dependent ATPase and 5'-3' DNA helicase required for the maintenance of chromosomal stability. Acts late in the Fanconi anemia pathway, after FANCD2 ubiquitination. Involved in the repair of DNA double-strand breaks by homologous recombination in a manner that depends on its association with BRCA1. Involved in the repair of abasic sites at replication forks by promoting the degradation of DNA-protein cross-links: acts by catalyzing unfolding of HMCES DNA-protein cross-link via its helicase activity, exposing the underlying DNA and enabling cleavage of the DNA-protein adduct by the SPRTN metalloprotease. Can unwind RNA:DNA substrates. Unwinds G-quadruplex DNA; unwinding requires a 5'-single stranded tail. This Homo sapiens (Human) protein is Fanconi anemia group J protein.